Reading from the N-terminus, the 115-residue chain is Evasin P1183 (115 aa).

Residues 1–25 (MTRNWSFRVIFVSAMWCALLKFATL) form the signal peptide. 4 disulfides stabilise this stretch: cysteine 38/cysteine 58, cysteine 54/cysteine 94, cysteine 70/cysteine 99, and cysteine 89/cysteine 108. 3 N-linked (GlcNAc...) asparagine glycosylation sites follow: asparagine 45, asparagine 72, and asparagine 103.

It is found in the secreted. In terms of biological role, salivary chemokine-binding protein which binds to host chemokine CCL2. In Amblyomma triste (Neotropical tick), this protein is Evasin P1183.